The sequence spans 256 residues: L-erythrulose-1-phosphate isomerase (256 aa).

Histidine 96 (electrophile) is an active-site residue. Glutamate 169 acts as the Proton acceptor in catalysis. 2 residues coordinate substrate: glycine 175 and serine 212.

This sequence belongs to the triosephosphate isomerase family. As to quaternary structure, homodimer.

It is found in the cytoplasm. It catalyses the reaction L-erythrulose 1-phosphate = D-erythrulose 4-phosphate. It participates in carbohydrate metabolism; erythritol degradation. In terms of biological role, catalyzes the isomerization of D-erythrulose-4P to L-erythrulose-1P. The chain is L-erythrulose-1-phosphate isomerase from Brucella melitensis biotype 1 (strain ATCC 23456 / CCUG 17765 / NCTC 10094 / 16M).